Consider the following 159-residue polypeptide: Transcription elongation factor GreA (159 aa).

A coiled-coil region spans residues 43 to 76; sequence LSENAEYDAAREEQSQLEAKIGDLENKLASATIL.

Belongs to the GreA/GreB family.

In terms of biological role, necessary for efficient RNA polymerase transcription elongation past template-encoded arresting sites. The arresting sites in DNA have the property of trapping a certain fraction of elongating RNA polymerases that pass through, resulting in locked ternary complexes. Cleavage of the nascent transcript by cleavage factors such as GreA or GreB allows the resumption of elongation from the new 3'terminus. GreA releases sequences of 2 to 3 nucleotides. This is Transcription elongation factor GreA from Chlorobaculum parvum (strain DSM 263 / NCIMB 8327) (Chlorobium vibrioforme subsp. thiosulfatophilum).